Here is a 373-residue protein sequence, read N- to C-terminus: GTP cyclohydrolase 1 type 2 homolog (373 aa).

Residues His68, His69, Asp107, His333, and Glu336 each coordinate a divalent metal cation.

It belongs to the GTP cyclohydrolase I type 2/NIF3 family. In terms of assembly, homohexamer.

The protein is GTP cyclohydrolase 1 type 2 homolog (yqfO) of Bacillus subtilis (strain 168).